A 196-amino-acid chain; its full sequence is Peptidoglycan recognition protein (196 aa).

Positions 1–23 (MARLHSAVVLALALSSLLTEIAA) are cleaved as a signal peptide. 2 cysteine pairs are disulfide-bonded: cysteine 25–cysteine 147 and cysteine 61–cysteine 67. In terms of domain architecture, N-acetylmuramoyl-L-alanine amidase spans 46–173 (RPVSLVIVQH…RQLIASESPG (128 aa)).

This sequence belongs to the N-acetylmuramoyl-L-alanine amidase 2 family. As to quaternary structure, monomer. As to expression, constitutively expressed in fat body, epithelial cells and hemocytes. Not detected in Malpighian tubules, silk gland or midgut.

Binds specifically to peptidoglycan and triggers the propenoloxidase cascade which is an important insect defense mechanism. The polypeptide is Peptidoglycan recognition protein (Bombyx mori (Silk moth)).